We begin with the raw amino-acid sequence, 325 residues long: Biotin synthase (325 aa).

Residues 51-280 (FMGRKADLCT…NVYIRYAGGR (230 aa)) enclose the Radical SAM core domain. [4Fe-4S] cluster is bound by residues C69, C73, and C76. Residues S113, C145, C205, and R275 each coordinate [2Fe-2S] cluster.

The protein belongs to the radical SAM superfamily. Biotin synthase family. As to quaternary structure, homodimer. [4Fe-4S] cluster is required as a cofactor. Requires [2Fe-2S] cluster as cofactor.

The enzyme catalyses (4R,5S)-dethiobiotin + (sulfur carrier)-SH + 2 reduced [2Fe-2S]-[ferredoxin] + 2 S-adenosyl-L-methionine = (sulfur carrier)-H + biotin + 2 5'-deoxyadenosine + 2 L-methionine + 2 oxidized [2Fe-2S]-[ferredoxin]. Its pathway is cofactor biosynthesis; biotin biosynthesis; biotin from 7,8-diaminononanoate: step 2/2. Catalyzes the conversion of dethiobiotin (DTB) to biotin by the insertion of a sulfur atom into dethiobiotin via a radical-based mechanism. The polypeptide is Biotin synthase (Clostridioides difficile (strain 630) (Peptoclostridium difficile)).